The sequence spans 724 residues: Aquaglyceroporin-4 (724 aa).

Disordered stretches follow at residues 1 to 167 (MADE…SIRR), 248 to 267 (INMA…NQAD), and 302 to 396 (AHGL…DLDG). At 1–434 (MADEEIKPTS…VIRLRFREPL (434 aa)) the chain is on the cytoplasmic side. Over residues 87 to 96 (LTGQVPQDND) the composition is skewed to polar residues. The segment covering 252–265 (QQQQQQQQQQPQNQ) has biased composition (low complexity). 2 stretches are compositionally biased toward polar residues: residues 307–325 (SPTN…TAPS) and 360–370 (PSQTSQNSQNE). Residues 435–455 (AELLAVTCQLTLGFCADLVVV) form a helical membrane-spanning segment. Topologically, residues 456 to 472 (TSGKNASPAGNEATTDW) are extracellular. The helical transmembrane segment at 473–493 (AWGLASMLGIYIAGGISGAHL) threads the bilayer. The short motif at 494 to 496 (NPA) is the NPA 1 element. Topologically, residues 494–513 (NPAISIMLWIYRGFPLRKVP) are cytoplasmic. The helical transmembrane segment at 514–534 (MYVLAQILGAFIAALISFGLY) threads the bilayer. Residues 535–567 (QTNIVEYGGTDLKTSDTMGAFITYPRYPWINAS) lie on the Extracellular side of the membrane. Asn565 carries an N-linked (GlcNAc...) asparagine glycan. The helical transmembrane segment at 568-588 (TSFFTEFVGTAILAVAVLALG) threads the bilayer. Over 589–595 (DDMNAPP) the chain is Cytoplasmic. The chain crosses the membrane as a helical span at residues 596–616 (GAGMSAFILGLVITVLSMAFG). The Extracellular portion of the chain corresponds to 617–647 (YNTGAALNPSRDLGPRLALAALGYGKDLFTD). Residues 624–626 (NPS) carry the NPA 2 motif. The helical transmembrane segment at 648–668 (VYWIWGNWCAPILGAIFGAFL) threads the bilayer. Residues 669–724 (YDAAIFAGGESPVNYPRKRIKRAGHKWRKKWGVRLRKMKPAKKGEDEAYRRWKESQ) lie on the Cytoplasmic side of the membrane.

This sequence belongs to the MIP/aquaporin (TC 1.A.8) family.

It is found in the membrane. It catalyses the reaction H2O(in) = H2O(out). The catalysed reaction is glycerol(in) = glycerol(out). In terms of biological role, water channel required to facilitate the transport of water across membranes. May play a role in the vegetative growth. This chain is Aquaglyceroporin-4, found in Botryotinia fuckeliana (strain B05.10) (Noble rot fungus).